Here is a 1330-residue protein sequence, read N- to C-terminus: ABC multidrug transporter mdr4 (1330 aa).

Residue Asn-3 is glycosylated (N-linked (GlcNAc...) asparagine). 6 consecutive transmembrane segments (helical) span residues Val-90–Leu-110, Val-144–Cys-164, Lys-218–Ile-238, Ile-243–His-263, His-324–Trp-344, and Ile-370–Phe-390. Positions Ile-94–Ser-392 constitute an ABC transmembrane type-1 1 domain. Residues Ile-428–Leu-666 enclose the ABC transporter 1 domain. Gly-463–Ser-470 contacts ATP. Asn-707 carries N-linked (GlcNAc...) asparagine glycosylation. Residues Val-717–Arg-736 form a disordered region. Residues Ser-722–Arg-733 are compositionally biased toward basic and acidic residues. 6 consecutive transmembrane segments (helical) span residues Leu-761–Phe-781, Leu-806–Phe-826, Ala-871–Ile-893, Ala-903–Met-923, Ala-989–Gly-1009, and Phe-1023–Leu-1043. An ABC transmembrane type-1 2 domain is found at Leu-761–Lys-1049. The ABC transporter 2 domain maps to Ala-1086–His-1325. Gly-1121–Ser-1128 contributes to the ATP binding site.

It belongs to the ABC transporter superfamily. ABCB family. Multidrug resistance exporter (TC 3.A.1.201) subfamily.

Its subcellular location is the cell membrane. It catalyses the reaction itraconazole(in) + ATP + H2O = itraconazole(out) + ADP + phosphate + H(+). It carries out the reaction voriconazole(in) + ATP + H2O = voriconazole(out) + ADP + phosphate + H(+). In terms of biological role, pleiotropic ABC efflux transporter that confers resistance to azoles such as itraconazole and voriconazole. The polypeptide is ABC multidrug transporter mdr4 (Aspergillus fumigatus (strain ATCC MYA-4609 / CBS 101355 / FGSC A1100 / Af293) (Neosartorya fumigata)).